Here is a 399-residue protein sequence, read N- to C-terminus: Developmentally-regulated G-protein 1 (399 aa).

One can recognise an OBG-type G domain in the interval Gly63 to Gly288. Residues Gly69–Ser76, Asp115–Ile119, and Asn246–Asp249 contribute to the GTP site. One can recognise a TGS domain in the interval Gly288 to Lys366. The tract at residues Lys367–Gln399 is disordered. Positions Ile388–Gln399 are enriched in basic and acidic residues.

This sequence belongs to the TRAFAC class OBG-HflX-like GTPase superfamily. OBG GTPase family. Expressed in actively growing tissues and reproductive organs. Mostly expressed in leaves, stems and siliques. Also present in flowers and flower buds, and, to a lower extent, in roots.

The protein resides in the cytoplasmic vesicle. The protein localises to the cytoplasm. Its function is as follows. Binds GDP and GTP, and has low GTPase activity. May interact with phosphatidic acid (PA). In Arabidopsis thaliana (Mouse-ear cress), this protein is Developmentally-regulated G-protein 1 (DRG1).